Reading from the N-terminus, the 360-residue chain is MVDKINLEGWMRPSIRTLKAYESKSIPDCVRLDANENPLPWPPGMIEQLLGSDIAFNRYPDGGAQELKEALSRYTGVPAEGILTGNGSDELIQLLMTTFGGEKGAVVIHPPTFSMYEAAARVTGTGVLEVPLLLTETGRDFRLDVEGMLKAAAQPQVHMIVLCNPNNPTGTLFPREEILRIVAESGKIVIVDEAYGEFSGESVVDQIPYCPNLLVMKTFSKLFAMAALRLGYLLGQPSIIGALNRARQPFNVNSFSQKAGAIALNYGKEYAEQGRILTAELAKIVEALTAFASVKVFATRANFVLFQPEDPDRVYQELIGKGFLIRNMGNLPLVGKALRLSAGSPEDNERLIKALGEILK.

The residue at position 221 (lysine 221) is an N6-(pyridoxal phosphate)lysine.

It belongs to the class-II pyridoxal-phosphate-dependent aminotransferase family. Histidinol-phosphate aminotransferase subfamily. In terms of assembly, homodimer. The cofactor is pyridoxal 5'-phosphate.

The catalysed reaction is L-histidinol phosphate + 2-oxoglutarate = 3-(imidazol-4-yl)-2-oxopropyl phosphate + L-glutamate. It participates in amino-acid biosynthesis; L-histidine biosynthesis; L-histidine from 5-phospho-alpha-D-ribose 1-diphosphate: step 7/9. The chain is Histidinol-phosphate aminotransferase from Desulfitobacterium hafniense (strain Y51).